A 591-amino-acid polypeptide reads, in one-letter code: L-fucose isomerase (591 aa).

Residues Glu338 and Asp362 each act as proton acceptor in the active site. Mn(2+)-binding residues include Glu338, Asp362, and His529.

The protein belongs to the L-fucose isomerase family. The cofactor is Mn(2+).

The protein localises to the cytoplasm. It catalyses the reaction L-fucose = L-fuculose. It participates in carbohydrate degradation; L-fucose degradation; L-lactaldehyde and glycerone phosphate from L-fucose: step 1/3. Its function is as follows. Converts the aldose L-fucose into the corresponding ketose L-fuculose. This chain is L-fucose isomerase, found in Phocaeicola vulgatus (strain ATCC 8482 / DSM 1447 / JCM 5826 / CCUG 4940 / NBRC 14291 / NCTC 11154) (Bacteroides vulgatus).